We begin with the raw amino-acid sequence, 122 residues long: Small ribosomal subunit protein uS13 (122 aa).

Residues 95-122 (SLPVRGQRTHTNARTRKGPAKSIAGKKK) form a disordered region.

The protein belongs to the universal ribosomal protein uS13 family. Part of the 30S ribosomal subunit. Forms a loose heterodimer with protein S19. Forms two bridges to the 50S subunit in the 70S ribosome.

In terms of biological role, located at the top of the head of the 30S subunit, it contacts several helices of the 16S rRNA. In the 70S ribosome it contacts the 23S rRNA (bridge B1a) and protein L5 of the 50S subunit (bridge B1b), connecting the 2 subunits; these bridges are implicated in subunit movement. Contacts the tRNAs in the A and P-sites. This is Small ribosomal subunit protein uS13 from Mesorhizobium japonicum (strain LMG 29417 / CECT 9101 / MAFF 303099) (Mesorhizobium loti (strain MAFF 303099)).